The following is a 113-amino-acid chain: Large ribosomal subunit protein uL24 (113 aa).

The protein belongs to the universal ribosomal protein uL24 family. As to quaternary structure, part of the 50S ribosomal subunit.

One of two assembly initiator proteins, it binds directly to the 5'-end of the 23S rRNA, where it nucleates assembly of the 50S subunit. Its function is as follows. One of the proteins that surrounds the polypeptide exit tunnel on the outside of the subunit. This is Large ribosomal subunit protein uL24 from Micrococcus luteus (strain ATCC 4698 / DSM 20030 / JCM 1464 / CCM 169 / CCUG 5858 / IAM 1056 / NBRC 3333 / NCIMB 9278 / NCTC 2665 / VKM Ac-2230) (Micrococcus lysodeikticus).